The sequence spans 675 residues: L-type lectin-domain containing receptor kinase IV.1 (675 aa).

The signal sequence occupies residues 1 to 22 (MFLKLLTIFFFFFFNLIFQSSS). The Extracellular portion of the chain corresponds to 23–291 (QSLNFAYNNG…EPKRISEFYK (269 aa)). Positions 25-261 (LNFAYNNGFN…SEHYILGWSF (237 aa)) are legume-lectin like. N-linked (GlcNAc...) asparagine glycosylation is found at asparagine 57, asparagine 79, asparagine 112, asparagine 134, asparagine 153, and asparagine 186. A helical membrane pass occupies residues 292–312 (IGMPLISLFLIFSFIFLVCYI). The Cytoplasmic segment spans residues 313–675 (VRRRRKFAEE…IADSQLSGGR (363 aa)). Residues 347–624 (FKEKGLLGTG…LHYLRGDAKL (278 aa)) form the Protein kinase domain. ATP contacts are provided by residues 353–361 (LGTGGFGSV) and lysine 376. Residue aspartate 472 is the Proton acceptor of the active site.

This sequence in the C-terminal section; belongs to the protein kinase superfamily. Ser/Thr protein kinase family. The protein in the N-terminal section; belongs to the leguminous lectin family.

Its subcellular location is the membrane. The catalysed reaction is L-seryl-[protein] + ATP = O-phospho-L-seryl-[protein] + ADP + H(+). It catalyses the reaction L-threonyl-[protein] + ATP = O-phospho-L-threonyl-[protein] + ADP + H(+). The chain is L-type lectin-domain containing receptor kinase IV.1 (LECRK41) from Arabidopsis thaliana (Mouse-ear cress).